Reading from the N-terminus, the 395-residue chain is MMILGNLRVATLSDGYGLIPDAAILIEGGRIQWVGPEAHLPPSAAPRHDMGGRLCTPALIDCHTHAVFAGTRAAEFEMRLKGASYAEVAAAGGGIVSTVMATRAAGADELLAASLPRIDAMLAGGVGTVEIKSGYGLDIETELRMLRVARRIGELRKVRVRTSFLGAHAVPPDHRGRPDAYLAEVVLPALKVAQDEGLVDAVDGFCEGIAFSPAQIAHLFAQAHKLRLPVKLHAEQLSNLGGAALAARHDALSADHLEYLDAEGVAALAAAGTVAVLLPGAFYALRETQAPPVAALRAAGVPMAVATDLNPGTSPLGALGLAMNMACTLFRLTPEEALAGTTIHAARALGLSDTGRIAPGFRADLAIWEAEHPAELSWRIGPAPLHARLHEGEFV.

The Fe(3+) site is built by His-63 and His-65. Zn(2+) contacts are provided by His-63 and His-65. Residues Arg-72, Tyr-135, and His-168 each contribute to the 4-imidazolone-5-propanoate site. Tyr-135 provides a ligand contact to N-formimidoyl-L-glutamate. His-233 is a Fe(3+) binding site. Position 233 (His-233) interacts with Zn(2+). Residue Gln-236 coordinates 4-imidazolone-5-propanoate. Asp-308 serves as a coordination point for Fe(3+). Asp-308 lines the Zn(2+) pocket. Residues Asn-310 and Gly-312 each coordinate N-formimidoyl-L-glutamate. Thr-313 is a 4-imidazolone-5-propanoate binding site.

The protein belongs to the metallo-dependent hydrolases superfamily. HutI family. Zn(2+) is required as a cofactor. It depends on Fe(3+) as a cofactor.

Its subcellular location is the cytoplasm. It catalyses the reaction 4-imidazolone-5-propanoate + H2O = N-formimidoyl-L-glutamate. It participates in amino-acid degradation; L-histidine degradation into L-glutamate; N-formimidoyl-L-glutamate from L-histidine: step 3/3. In terms of biological role, catalyzes the hydrolytic cleavage of the carbon-nitrogen bond in imidazolone-5-propanoate to yield N-formimidoyl-L-glutamate. It is the third step in the universal histidine degradation pathway. The chain is Imidazolonepropionase from Cereibacter sphaeroides (strain ATCC 17023 / DSM 158 / JCM 6121 / CCUG 31486 / LMG 2827 / NBRC 12203 / NCIMB 8253 / ATH 2.4.1.) (Rhodobacter sphaeroides).